A 450-amino-acid chain; its full sequence is Sulfide:quinone oxidoreductase, mitochondrial (450 aa).

FAD-binding positions include 53 to 54, Glu75, Gln83, and Val118; that span reads SG. Position 173 is an N6-acetyllysine (Lys173). Cys201 acts as the Cysteine persulfide intermediate in catalysis. Residues Cys201 and Cys379 are joined by a disulfide bond. Asp336 contributes to the FAD binding site. Position 343 is a phosphoserine (Ser343). An FAD-binding site is contributed by 344 to 347; the sequence is KTAA. Cys379 acts as the Cysteine persulfide intermediate in catalysis.

It belongs to the SQRD family. FAD serves as cofactor.

It localises to the mitochondrion. It carries out the reaction ubiquinone-10 + hydrogen sulfide + sulfite + 2 H(+) = ubiquinol-10 + thiosulfate. The enzyme catalyses a quinone + hydrogen sulfide + glutathione + H(+) = S-sulfanylglutathione + a quinol. It catalyses the reaction ubiquinone-10 + hydrogen sulfide + glutathione + H(+) = S-sulfanylglutathione + ubiquinol-10. Catalyzes the oxidation of hydrogen sulfide with the help of a quinone, such as ubiquinone-10, giving rise to thiosulfate and ultimately to sulfane (molecular sulfur) atoms. Requires an additional electron acceptor; can use sulfite, sulfide or cyanide (in vitro). It is believed the in vivo electron acceptor is glutathione. In Homo sapiens (Human), this protein is Sulfide:quinone oxidoreductase, mitochondrial.